A 405-amino-acid chain; its full sequence is Alpha-N-acetylgalactosaminidase (405 aa).

3 disulfide bridges follow: Cys21–Cys63, Cys25–Cys32, and Cys111–Cys142. Residues 61-62 (DD) and Lys138 each bind substrate. Asp140 acts as the Nucleophile in catalysis. The N-linked (GlcNAc...) asparagine glycan is linked to Asn161. Cysteines 171 and 193 form a disulfide. A substrate-binding site is contributed by Ser172. Asn185 carries N-linked (GlcNAc...) asparagine glycosylation. 2 residues coordinate substrate: Arg197 and Asp201. The active-site Proton donor is the Asp201. The N-linked (GlcNAc...) asparagine glycan is linked to Asn369.

Belongs to the glycosyl hydrolase 27 family. Homodimer.

The protein resides in the lysosome. It catalyses the reaction Cleavage of non-reducing alpha-(1-&gt;3)-N-acetylgalactosamine residues from human blood group A and AB mucin glycoproteins, Forssman hapten and blood group A lacto series glycolipids.. The enzyme catalyses a neolactoside IV(3)-alpha-GalNAc,IV(2)-alpha-Fuc-nLc4Cer(d18:1(4E)) + H2O = a neolactoside IV(2)-alpha-Fuc-nLc4Cer(d18:1(4E)) + N-acetyl-alpha-D-galactosamine. It carries out the reaction a neolactoside IV(3)-alpha-GalNAc,IV(2)-alpha-Fuc-nLc4Cer(d18:0) + H2O = a neolactoside IV(2)-alpha-Fuc-nLc4Cer(d18:0) + N-acetyl-alpha-D-galactosamine. The catalysed reaction is a globoside IV3GalNAc-Gb4Cer + H2O = N-acetyl-alpha-D-galactosamine + a globoside Gb4Cer. Functionally, removes terminal alpha-N-acetylgalactosamine residues from glycolipids and glycopeptides. Required for the breakdown of glycolipids. The polypeptide is Alpha-N-acetylgalactosaminidase (NAGA) (Gallus gallus (Chicken)).